The chain runs to 192 residues: Xanthine phosphoribosyltransferase (192 aa).

Xanthine is bound by residues L20 and N27. Residue 128–132 (AHGEA) participates in 5-phospho-alpha-D-ribose 1-diphosphate binding. K156 is a xanthine binding site.

The protein belongs to the purine/pyrimidine phosphoribosyltransferase family. Xpt subfamily. In terms of assembly, homodimer.

The protein localises to the cytoplasm. It carries out the reaction XMP + diphosphate = xanthine + 5-phospho-alpha-D-ribose 1-diphosphate. It participates in purine metabolism; XMP biosynthesis via salvage pathway; XMP from xanthine: step 1/1. Its function is as follows. Converts the preformed base xanthine, a product of nucleic acid breakdown, to xanthosine 5'-monophosphate (XMP), so it can be reused for RNA or DNA synthesis. This chain is Xanthine phosphoribosyltransferase, found in Lactobacillus gasseri (strain ATCC 33323 / DSM 20243 / BCRC 14619 / CIP 102991 / JCM 1131 / KCTC 3163 / NCIMB 11718 / NCTC 13722 / AM63).